We begin with the raw amino-acid sequence, 469 residues long: MALLTHLLVCTFGMGSWVAINGLWVELPLLVTELPEGWYLPSYLTMVIQLANIGPLLVTLLHHFQPSCLSEVPIIFTVLAVGTVACALFAFLWNVTSWVLDGRHSIAFMVLTFFLALVDCTSSVTFLPFMSRLPACYLTTFFVGEGLSSLLPALVALAQGSGLTTCVNVTQPPDTTPSTATTGKTVFLQGANSTLGTDLTGTTRSAIHLESRYLPANFSPLVFFLLLSFMMACCLAAFFLLQRQPRPRESSIEDLLTSQVTLHSIRPREGDDLGPPDPGPSSKAQGLPEEKTASDHPAHLAFIYVLVAFVNALTNGVLPSVQTYSCLSYGPVAYHLSATLSSMANPLACFLSMFLPHRSLPFLGVLTVLGTGFGAYNMAMAVMSPCPLMQGHWAGEILIVASWVLFIGCLSYVKVMLGVILRDRSRSALVWCGAAVQLGSLLGALLMFPLVNVLRLFSSADFCSLQCSA.

The Cytoplasmic segment spans residues 1 to 6 (MALLTH). A helical transmembrane segment spans residues 7-27 (LLVCTFGMGSWVAINGLWVEL). The Extracellular portion of the chain corresponds to 28 to 43 (PLLVTELPEGWYLPSY). The helical transmembrane segment at 44-64 (LTMVIQLANIGPLLVTLLHHF) threads the bilayer. The Cytoplasmic segment spans residues 65 to 71 (QPSCLSE). The helical transmembrane segment at 72 to 92 (VPIIFTVLAVGTVACALFAFL) threads the bilayer. Over 93-105 (WNVTSWVLDGRHS) the chain is Extracellular. N-linked (GlcNAc...) asparagine glycosylation is present at Asn-94. Residues 106–126 (IAFMVLTFFLALVDCTSSVTF) form a helical membrane-spanning segment. The Cytoplasmic portion of the chain corresponds to 127–137 (LPFMSRLPACY). The helical transmembrane segment at 138–158 (LTTFFVGEGLSSLLPALVALA) threads the bilayer. The Extracellular portion of the chain corresponds to 159–220 (QGSGLTTCVN…SRYLPANFSP (62 aa)). The N-linked (GlcNAc...) asparagine glycan is linked to Asn-168. Residues 221–241 (LVFFLLLSFMMACCLAAFFLL) traverse the membrane as a helical segment. The Cytoplasmic portion of the chain corresponds to 242–297 (QRQPRPRESSIEDLLTSQVTLHSIRPREGDDLGPPDPGPSSKAQGLPEEKTASDHP). Residue Ser-251 is modified to Phosphoserine. Residues 266 to 290 (RPREGDDLGPPDPGPSSKAQGLPEE) form a disordered region. Residues 298 to 318 (AHLAFIYVLVAFVNALTNGVL) form a helical membrane-spanning segment. Topologically, residues 319 to 335 (PSVQTYSCLSYGPVAYH) are extracellular. A helical transmembrane segment spans residues 336-356 (LSATLSSMANPLACFLSMFLP). Over 357-361 (HRSLP) the chain is Cytoplasmic. Residues 362–382 (FLGVLTVLGTGFGAYNMAMAV) traverse the membrane as a helical segment. Residues 383–396 (MSPCPLMQGHWAGE) lie on the Extracellular side of the membrane. The chain crosses the membrane as a helical span at residues 397 to 417 (ILIVASWVLFIGCLSYVKVML). Over 418–427 (GVILRDRSRS) the chain is Cytoplasmic. Residues 428 to 448 (ALVWCGAAVQLGSLLGALLMF) form a helical membrane-spanning segment. Topologically, residues 449 to 469 (PLVNVLRLFSSADFCSLQCSA) are extracellular.

Belongs to the riboflavin transporter family.

The protein resides in the cell membrane. The enzyme catalyses riboflavin(in) = riboflavin(out). Plasma membrane transporter mediating the uptake by cells of the water soluble vitamin B2/riboflavin that plays a key role in biochemical oxidation-reduction reactions of the carbohydrate, lipid, and amino acid metabolism. This is Solute carrier family 52, riboflavin transporter, member 3 (SLC52A3) from Ailuropoda melanoleuca (Giant panda).